Consider the following 336-residue polypeptide: Flavonoid 4'-O-methyltransferase 3 (336 aa).

Positions 140 and 203 each coordinate S-adenosyl-L-methionine. His241 functions as the Proton acceptor in the catalytic mechanism.

This sequence belongs to the class I-like SAM-binding methyltransferase superfamily. Cation-independent O-methyltransferase family. In terms of assembly, homodimer. As to expression, expressed in leaves.

The catalysed reaction is scutellarein 7-methyl ether + S-adenosyl-L-methionine = ladanein + S-adenosyl-L-homocysteine + H(+). It catalyses the reaction cirsimaritin + S-adenosyl-L-methionine = salvigenin + S-adenosyl-L-homocysteine + H(+). It carries out the reaction cirsiliol + S-adenosyl-L-methionine = eupatorin + S-adenosyl-L-homocysteine + H(+). The enzyme catalyses genkwanin + S-adenosyl-L-methionine = apigenin 4',7-dimethyl ether + S-adenosyl-L-homocysteine. The protein operates within flavonoid metabolism. With respect to regulation, substrate inhibition by genkwanin (GENK) at concentrations above 2.5 mM. Flavonoid 4'-O-methyltransferase involved in the biosynthesis of polymethoxylated flavonoids natural products such as nevadensin and salvigenin, aroma compounds which contribute to the flavor of sweet basil, and exhibit pharmacological activities such as anti-allergic, anti-oxidant, antibacterial, anti-proliferative, and anti-inflammatory effects. Catalyzes S-adenosylmethionine-dependent regioselective 4'-O-methylation of flavonoids; active on various hydroxylated flavonoid substrates, including scutellarein-7-methyl ether (SCU7Me) and cirsimaritin (CIRM), and, with a lower efficiency, hispidulin, ladanein (LAD), cirsioliol (CIRL) and genkwanin (GENK). The chain is Flavonoid 4'-O-methyltransferase 3 from Ocimum basilicum (Sweet basil).